A 185-amino-acid polypeptide reads, in one-letter code: dTDP-4-dehydrorhamnose 3,5-epimerase (185 aa).

Substrate-binding positions include Arg23, Glu28, Gln47–Asn49, and Arg59. The active-site Proton acceptor is the His62. Residues Lys72 and His119 each coordinate substrate. Catalysis depends on Tyr132, which acts as the Proton donor. Residues Asp143 and Lys168 each coordinate substrate.

The protein belongs to the dTDP-4-dehydrorhamnose 3,5-epimerase family. In terms of assembly, homodimer.

The catalysed reaction is dTDP-4-dehydro-6-deoxy-alpha-D-glucose = dTDP-4-dehydro-beta-L-rhamnose. Its pathway is carbohydrate biosynthesis; dTDP-L-rhamnose biosynthesis. It functions in the pathway bacterial outer membrane biogenesis; LPS O-antigen biosynthesis. In terms of biological role, catalyzes the epimerization of the C3' and C5'positions of dTDP-6-deoxy-D-xylo-4-hexulose, forming dTDP-6-deoxy-L-lyxo-4-hexulose. The protein is dTDP-4-dehydrorhamnose 3,5-epimerase (rfbC) of Escherichia coli (strain K12).